Here is a 243-residue protein sequence, read N- to C-terminus: Dirigent protein 16 (243 aa).

Positions 1-24 (MMIKQSPFLLLTTILFTVAVFVAA) are cleaved as a signal peptide.

The protein belongs to the plant dirigent protein family. Homodimer.

The protein resides in the secreted. It is found in the extracellular space. It localises to the apoplast. Its function is as follows. Dirigent proteins impart stereoselectivity on the phenoxy radical-coupling reaction, yielding optically active lignans from two molecules of coniferyl alcohol in the biosynthesis of lignans, flavonolignans, and alkaloids and thus plays a central role in plant secondary metabolism. The protein is Dirigent protein 16 (DIR16) of Arabidopsis thaliana (Mouse-ear cress).